Consider the following 318-residue polypeptide: uncharacterized protein (318 aa).

This is an uncharacterized protein from Autographa californica nuclear polyhedrosis virus (AcMNPV).